A 241-amino-acid chain; its full sequence is Small ribosomal subunit protein uS2 (241 aa).

The protein belongs to the universal ribosomal protein uS2 family.

The chain is Small ribosomal subunit protein uS2 from Citrobacter koseri (strain ATCC BAA-895 / CDC 4225-83 / SGSC4696).